The following is a 329-amino-acid chain: Bile salt hydrolase/transferase (329 aa).

Cys-2 acts as the Nucleophile; acyl-thioester intermediate in catalysis. Deoxycholate-binding residues include Cys-2 and Arg-18. Asn-82 contacts taurine.

Belongs to the peptidase C59 family. As to quaternary structure, homotetramer. The tetramer consists of a dimer of dimers.

The enzyme catalyses glycocholate + H2O = cholate + glycine. The catalysed reaction is cholate + taurine = taurocholate + H2O. It catalyses the reaction taurodeoxycholate + H2O = deoxycholate + taurine. It carries out the reaction glycodeoxycholate + H2O = deoxycholate + glycine. The enzyme catalyses chenodeoxycholate + glycine = glycochenodeoxycholate + H2O. The catalysed reaction is taurochenodeoxycholate + H2O = chenodeoxycholate + taurine. It catalyses the reaction an L-alpha-amino acid + cholate = an N-choloyl-L-alpha-amino acid + H2O. It carries out the reaction an L-alpha-amino acid + taurocholate = an N-choloyl-L-alpha-amino acid + taurine. The enzyme catalyses glycocholate + an L-alpha-amino acid = an N-choloyl-L-alpha-amino acid + glycine. The catalysed reaction is cholate + L-histidine = L-histidocholate + H2O. It catalyses the reaction taurocholate + L-histidine = L-histidocholate + taurine. It carries out the reaction glycocholate + L-histidine = L-histidocholate + glycine. The enzyme catalyses cholate + L-arginine = L-arginocholate + H2O. The catalysed reaction is taurocholate + L-arginine = L-arginocholate + taurine. It catalyses the reaction glycocholate + L-arginine = L-arginocholate + glycine. It carries out the reaction cholate + L-phenylalanine = L-phenylalanocholate + H2O. The enzyme catalyses taurocholate + L-phenylalanine = L-phenylalanocholate + taurine. Its pathway is lipid metabolism; bile acid biosynthesis. Functionally, possesses dual functions in bile acid metabolism. Acts as a bile salt hydrolase that catalyzes the deconjugation of glycine- and taurine-linked bile salts, which occurs naturally in the intestines of humans, releasing amino acid residues and deconjugated bile salts (bile acids). Can hydrolyze the amide bond in major human conjugated bile salts, such as glycocholate (GCA), taurocholate (TCA) and taurodeoxycholate (TDCA). Shows a slight preference for taurine-conjugated bile acids as substrates. Also acts as an amine N-acyltransferase that conjugates a wide variety of amino acids to conjugated and non-conjugated bile acids, thus producing bacterial bile acid amidates (BBAAs) - also named microbially conjugated bile acids (MCBAs) - in the gastrointestinal tract. These BBAAs may facilitate communication between the microbiota and host through the activation of human ligand-activated transcription factors. In Clostridium perfringens (strain 13 / Type A), this protein is Bile salt hydrolase/transferase (cbh).